The chain runs to 114 residues: Large ribosomal subunit protein uL22 (114 aa).

The protein belongs to the universal ribosomal protein uL22 family. Part of the 50S ribosomal subunit.

In terms of biological role, this protein binds specifically to 23S rRNA; its binding is stimulated by other ribosomal proteins, e.g. L4, L17, and L20. It is important during the early stages of 50S assembly. It makes multiple contacts with different domains of the 23S rRNA in the assembled 50S subunit and ribosome. Its function is as follows. The globular domain of the protein is located near the polypeptide exit tunnel on the outside of the subunit, while an extended beta-hairpin is found that lines the wall of the exit tunnel in the center of the 70S ribosome. This Ehrlichia canis (strain Jake) protein is Large ribosomal subunit protein uL22.